The chain runs to 177 residues: Probable DNA-directed RNA polymerase subunit delta (177 aa).

An HTH HARE-type domain is found at 14-81 (CSMIEVVHSV…GENRWGLRSW (68 aa)). The segment at 90 to 177 (EILPQPKPKK…ETEEEEEEEL (88 aa)) is disordered. Residues 106 to 177 (DGFDDYIEED…ETEEEEEEEL (72 aa)) show a composition bias toward acidic residues.

The protein belongs to the RpoE family. As to quaternary structure, RNAP is composed of a core of 2 alpha, a beta and a beta' subunits. The core is associated with a delta subunit and one of several sigma factors.

Participates in both the initiation and recycling phases of transcription. In the presence of the delta subunit, RNAP displays an increased specificity of transcription, a decreased affinity for nucleic acids, and an increased efficiency of RNA synthesis because of enhanced recycling. This is Probable DNA-directed RNA polymerase subunit delta from Bacillus cereus (strain B4264).